Reading from the N-terminus, the 728-residue chain is Glutamate--cysteine ligase (728 aa).

Residues 517 to 552 (PVRTTRRGGSASRSASGTSTPNSGSSRPATPPLGPV) are disordered. Low complexity predominate over residues 523-536 (RGGSASRSASGTST).

This sequence belongs to the glutamate--cysteine ligase type 3 family.

The catalysed reaction is L-cysteine + L-glutamate + ATP = gamma-L-glutamyl-L-cysteine + ADP + phosphate + H(+). Its pathway is sulfur metabolism; glutathione biosynthesis; glutathione from L-cysteine and L-glutamate: step 1/2. This is Glutamate--cysteine ligase (gcs-1) from Neurospora crassa (strain ATCC 24698 / 74-OR23-1A / CBS 708.71 / DSM 1257 / FGSC 987).